The following is a 655-amino-acid chain: p-hydroxybenzoic acid efflux pump subunit AaeB (655 aa).

10 consecutive transmembrane segments (helical) span residues 13 to 33 (FAVK…HFQL), 38 to 58 (WAVL…GGEP), 69 to 89 (LRII…IAMI), 93 to 113 (LLMI…SSLV), 121 to 141 (WGLA…EPLL), 152 to 172 (EIVV…PRSI), 370 to 390 (LFWL…IAVV), 407 to 427 (FIYG…VIIP), 431 to 451 (QSML…GIEV), and 481 to 501 (LFLD…TVIL).

Belongs to the aromatic acid exporter ArAE (TC 2.A.85) family.

Its subcellular location is the cell inner membrane. Forms an efflux pump with AaeA. Could function as a metabolic relief valve, allowing to eliminate certain compounds when they accumulate to high levels in the cell. In Escherichia fergusonii (strain ATCC 35469 / DSM 13698 / CCUG 18766 / IAM 14443 / JCM 21226 / LMG 7866 / NBRC 102419 / NCTC 12128 / CDC 0568-73), this protein is p-hydroxybenzoic acid efflux pump subunit AaeB.